We begin with the raw amino-acid sequence, 250 residues long: Shieldin complex subunit 3 (250 aa).

Positions 28–83 (QDFPTRPLSRFIPWFPYDGSKLPLRPKRSPPVISEEAAEDVKQYLTISEHDAKSHS) are sufficient for interaction with MAD2L2. Positions 108–119 (LKEQTNSGNLGK) are enriched in polar residues. A disordered region spans residues 108-129 (LKEQTNSGNLGKQSEKGKQHKR).

As to quaternary structure, component of the shieldin complex, consisting of SHLD1, SHLD2, SHLD3 and MAD2L2/REV7. Within the complex, SHLD2 forms a scaffold which interacts with a SHLD3-MAD2L2 subcomplex via its N-terminus, and with SHLD1 via its C-terminus. Interacts with ASTE1.

It is found in the chromosome. Component of the shieldin complex, which plays an important role in repair of DNA double-stranded breaks (DSBs). During G1 and S phase of the cell cycle, the complex functions downstream of TP53BP1 to promote non-homologous end joining (NHEJ) and suppress DNA end resection. Mediates various NHEJ-dependent processes including immunoglobulin class-switch recombination, and fusion of unprotected telomeres. This is Shieldin complex subunit 3 from Homo sapiens (Human).